The sequence spans 276 residues: Glutathione S-transferase-like protein ustS (276 aa).

Residues S16–P109 form the GST N-terminal domain.

It belongs to the GST superfamily.

Its pathway is mycotoxin biosynthesis. In terms of biological role, glutathione S-transferase-like protein; part of the gene cluster that mediates the biosynthesis of the secondary metabolite ustiloxin B, an antimitotic tetrapeptide. First, ustA is processed by the subtilisin-like endoprotease Kex2 that is outside the ustiloxin B gene cluster, at the C-terminal side of Arg-Lys, after transfer to Golgi apparatus through the endoplasmic reticulum (ER). Cleavage by KEX2 generates 16 peptides YAIG-I to YAIG-XVI. To process the precursor peptide further, at least two peptidases are necessary to cleave the N-terminal and C-terminal sides of the Tyr-Ala-Ile-Gly core peptide which serves as backbone for the synthesis of ustiloxin B, through cyclization and modification of the tyrosine with a non-protein coding amino acid, norvaline. One of the two peptidases must be the serine peptidase ustP; and the other pepdidase is probably ustH. Macrocyclization of the core peptide derived from ustA requires the tyrosinase ustQ, as well as the homologous oxidases ustYa and ustYb, and leads to the production of the first cyclization product N-desmethylustiloxin F. For the formation of N-desmethylustiloxin F, three oxidation steps are required, hydroxylation at the benzylic position, hydroxylation at either the aromatic ring of Tyr or beta-position of Ile, and oxidative cyclization. UstQ may catalyze the oxidation of a phenol moiety, whereas the ustYa and ustYb are most likely responsible for the remaining two-step oxidations. N-desmethylustiloxin F is then methylated by ustM to yield ustiloxin F which in turn substrate of the cytochrome P450 monooxygenase ustC which catalyzes the formation of S-deoxyustiloxin H. The flavoprotein monooxygenases ustF1 and ustF2 then participate in the modification of the side chain of S-deoxyustiloxin H, leading to the synthesis of an oxime intermediate, via ustiloxin H. Finally, carboxylative dehydration performed by the cysteine desulfurase-like protein ustD yields ustiloxin B. The sequence is that of Glutathione S-transferase-like protein ustS from Aspergillus flavus (strain ATCC 200026 / FGSC A1120 / IAM 13836 / NRRL 3357 / JCM 12722 / SRRC 167).